The chain runs to 478 residues: tRNA(Ile)-lysidine synthase (478 aa).

An ATP-binding site is contributed by 27–32 (SGGSDS).

Belongs to the tRNA(Ile)-lysidine synthase family.

It is found in the cytoplasm. It catalyses the reaction cytidine(34) in tRNA(Ile2) + L-lysine + ATP = lysidine(34) in tRNA(Ile2) + AMP + diphosphate + H(+). Ligates lysine onto the cytidine present at position 34 of the AUA codon-specific tRNA(Ile) that contains the anticodon CAU, in an ATP-dependent manner. Cytidine is converted to lysidine, thus changing the amino acid specificity of the tRNA from methionine to isoleucine. This is tRNA(Ile)-lysidine synthase from Rickettsia africae (strain ESF-5).